A 201-amino-acid chain; its full sequence is CASP-like protein 2A1 (201 aa).

The segment at 1–27 (MEKRDKGSSPMATMMGSRDENEDVENT) is disordered. Residues 1–30 (MEKRDKGSSPMATMMGSRDENEDVENTTRT) lie on the Cytoplasmic side of the membrane. A helical membrane pass occupies residues 31–51 (AETMLRLVPMALCVSALVVML). Residues 52–72 (KNTQTNDYGSLSYSDLGAFRY) lie on the Extracellular side of the membrane. The chain crosses the membrane as a helical span at residues 73–93 (LVHVNGICAGYSLLSAVIVAM). Residues 94-101 (PRASTMPR) are Cytoplasmic-facing. A helical membrane pass occupies residues 102-122 (AWAFFLLDQVLTYVILAAGTV). At 123–152 (STEVLYLASKGDTTITWSEACVSFGGFCHK) the chain is on the extracellular side. A helical transmembrane segment spans residues 153 to 173 (ALISIVITFVVVICYAALSLL). Residues 174–201 (SSYKLFSKYDSPVLTYPGKGIEIATFHG) are Cytoplasmic-facing.

It belongs to the Casparian strip membrane proteins (CASP) family. Homodimer and heterodimers.

The protein localises to the cell membrane. The sequence is that of CASP-like protein 2A1 from Populus trichocarpa (Western balsam poplar).